The sequence spans 63 residues: Beta-defensin 6 (63 aa).

The first 22 residues, 1 to 22, serve as a signal peptide directing secretion; the sequence is MKIHYLLFAFILVMLSPLAAFS. The residue at position 23 (Q23) is a Pyrrolidone carboxylic acid. Intrachain disulfides connect C31–C59, C38–C52, and C42–C60.

It belongs to the beta-defensin family. Predominantly expressed in skeletal muscle, also expressed in esophagus, tongue, and trachea. Also expressed in lung when induced by lipopolysaccharide.

The protein localises to the secreted. Its function is as follows. Has potent antibacterial activity against E.coli (ATCC 25922). This is Beta-defensin 6 (Defb6) from Mus musculus (Mouse).